The primary structure comprises 469 residues: Glutamine synthetase (469 aa).

Positions 14-98 constitute a GS beta-grasp domain; the sequence is NDVKYVDLRF…ITCDVLEPTT (85 aa). One can recognise a GS catalytic domain in the interval 106–469; it reads PRGIAKKAEA…PVEFDMYYSG (364 aa). The Mg(2+) site is built by E131 and E133. Position 209 (E209) interacts with ATP. Mg(2+) contacts are provided by E214 and E221. L-glutamate is bound by residues 265–266 and G266; that span reads NG. Position 270 (H270) interacts with Mg(2+). ATP-binding positions include 272–274 and S274; that span reads HQS. L-glutamate contacts are provided by R322, E328, and R340. Residues R340, R345, and K353 each coordinate ATP. E358 contributes to the Mg(2+) binding site. R360 contributes to the L-glutamate binding site. Y398 is subject to O-AMP-tyrosine.

It belongs to the glutamine synthetase family. In terms of assembly, oligomer of 12 subunits arranged in the form of two hexameric ring. Requires Mg(2+) as cofactor.

It is found in the cytoplasm. The enzyme catalyses L-glutamate + NH4(+) + ATP = L-glutamine + ADP + phosphate + H(+). Its activity is regulated as follows. The activity of this enzyme could be controlled by adenylation under conditions of abundant glutamine. Catalyzes the ATP-dependent biosynthesis of glutamine from glutamate and ammonia. This Bradyrhizobium diazoefficiens (strain JCM 10833 / BCRC 13528 / IAM 13628 / NBRC 14792 / USDA 110) protein is Glutamine synthetase.